Reading from the N-terminus, the 415-residue chain is Procollagen C-endopeptidase enhancer 2 (415 aa).

Residues 1–23 form the signal peptide; sequence MRGANAWAPLCLLLAAATQLSRQ. Intrachain disulfides connect C33–C59, C86–C107, C154–C181, C208–C231, C297–C364, C301–C367, and C312–C415. 2 CUB domains span residues 33-144 and 154-268; these read CGGI…FSAA and CGGL…YIFR. The NTR domain occupies 297 to 415; it reads CQQKCRRTGT…LLDALKNKQC (119 aa). An N-linked (GlcNAc...) asparagine glycan is attached at N355.

As to quaternary structure, interacts with heparin with high affinity, and type I or II collagen. In terms of processing, O-glycosylated; contains sialic acid. As to expression, highly expressed in the heart, trabecular meshwork, pituitary gland, bladder, mammary gland, trachea and placenta and weakly expressed in the brain. Expressed in cartilage.

It localises to the secreted. Binds to the C-terminal propeptide of types I and II procollagens and may enhance the cleavage of that propeptide by BMP1. This chain is Procollagen C-endopeptidase enhancer 2 (PCOLCE2), found in Homo sapiens (Human).